The chain runs to 95 residues: MAIFKSISSISNSTGSMGSSIGASNLNGFASNDNSISCFDGGCGGSGGSGGSGGLAGWSGLSGWGGIGGFNGSCGGSNANIINIDIDIGRRRRCC.

It belongs to the UPF0512 family.

In Dictyostelium discoideum (Social amoeba), this protein is UPF0512 protein H.